A 433-amino-acid chain; its full sequence is Poly(A) ribonuclease POP2 (433 aa).

Met-1 carries the post-translational modification N-acetylmethionine. Residues 78–98 (LLTQQQQQQQQQQQPFNIGTP) are disordered. Low complexity predominate over residues 81 to 91 (QQQQQQQQQQQ). Thr-97 carries the phosphothreonine; by YAK1 modification. The a divalent metal cation site is built by Ser-188, Glu-190, Asp-310, and Gln-394.

It belongs to the CAF1 family. As to quaternary structure, subunit of the 1.0 MDa CCR4-NOT core complex that contains CCR4, CAF1, NOT1, NOT2, NOT3, NOT4, NOT5, CAF40 and CAF130. In the complex interacts with NOT1. The core complex probably is part of a less characterized 1.9 MDa CCR4-NOT complex. It depends on Mg(2+) as a cofactor.

The protein localises to the cytoplasm. The protein resides in the nucleus. It catalyses the reaction Exonucleolytic cleavage of poly(A) to 5'-AMP.. Acts as a probably catalytic component of the CCR4-NOT core complex, which in the nucleus seems to be a general transcription factor, and in the cytoplasm the major mRNA deadenylase involved in mRNA turnover. In vitro, POP2 has 3'-exoribonuclease activity with a preference for poly(A) RNAs, but also degrades poly(U) and poly(C) RNAs. Is part of a glucose-sensing system involved in growth control in response to glucose availability. In Saccharomyces cerevisiae (strain ATCC 204508 / S288c) (Baker's yeast), this protein is Poly(A) ribonuclease POP2 (POP2).